The sequence spans 1087 residues: Band 4.1-like protein 3 (1087 aa).

Methionine 1 carries the post-translational modification N-acetylmethionine. A disordered region spans residues 1-43 (MTTESGSDSESKPDQEAEPQEAAGAQGRAGAPVPEPPKEEQQQ). N-acetylthreonine; in Band 4.1-like protein 3, N-terminally processed is present on threonine 2. Positions 20–32 (QEAAGAQGRAGAP) are enriched in low complexity. Serine 88 is subject to Phosphoserine. Residues 110-391 (MQCKVILLDG…EHHTFFRLLL (282 aa)) form the FERM domain. The interval 394-513 (APPKKFLTLG…PGLGTDSCPL (120 aa)) is hydrophilic. Phosphoserine is present on residues serine 420, serine 443, and serine 460. Residues 459 to 469 (ISQTNLITTVT) are compositionally biased toward polar residues. 4 disordered regions span residues 459-529 (ISQT…TELR), 541-563 (GYEPSRAEHLPGEPALDSDGPGR), 675-715 (SASL…EDAE), and 937-965 (SETLEQKPHFESSTVKTETISFGSVSPGG). A phosphothreonine mark is found at threonine 469 and threonine 492. A spectrin--actin-binding region spans residues 514 to 860 (SPPSTHCAPT…VVQETVLVEE (347 aa)). Residues 516-526 (PSTHCAPTSPT) are compositionally biased toward polar residues. The span at 681–691 (DPSDSSEEETD) shows a compositional bias: acidic residues. Over residues 698–707 (AADGETTATE) the composition is skewed to low complexity. Phosphothreonine is present on threonine 706. Phosphoserine occurs at positions 708, 960, and 962. A C-terminal (CTD) region spans residues 861–1083 (RRVVHASGDA…VHKETEITPE (223 aa)). Residues 947 to 960 (ESSTVKTETISFGS) are compositionally biased toward polar residues. Threonine 1081 is modified (phosphothreonine).

Interacts (via FERM domain) with CADM1. Interacts (via FERM domain) with PRMT3; the interaction is direct and inhibits the protein-arginine N-methyltransferase activity of PRMT3. Interacts with PRMT5. Interacts with PRMT6. Expressed at high levels in brain, with lower levels in kidney, intestine, and testis. Detected in lung.

Its subcellular location is the cytoplasm. It localises to the cytoskeleton. The protein localises to the cell junction. It is found in the cell membrane. Functionally, tumor suppressor that inhibits cell proliferation and promotes apoptosis. Modulates the activity of protein arginine N-methyltransferases, including PRMT3 and PRMT5. The sequence is that of Band 4.1-like protein 3 from Homo sapiens (Human).